We begin with the raw amino-acid sequence, 110 residues long: Parvalbumin alpha (110 aa).

At Ser-2 the chain carries N-acetylserine. A phosphoserine mark is found at Ser-2 and Ser-24. EF-hand domains lie at 39–74 (KSPEDVKKVFHILDKDKSGFIEEEELGFILKGFSPD) and 78–110 (LSVKETKTLLAAGDKDGDGKIGADEFSTLVAES). Residues Asp-52, Asp-54, Ser-56, Phe-58, Glu-60, Glu-63, Asp-91, Asp-93, Asp-95, Lys-97, and Glu-102 each coordinate Ca(2+).

This sequence belongs to the parvalbumin family.

In muscle, parvalbumin is thought to be involved in relaxation after contraction. It binds two calcium ions. This chain is Parvalbumin alpha (PVALB), found in Bos taurus (Bovine).